A 241-amino-acid chain; its full sequence is Probable phosphatase Cthe_0111 (241 aa).

Zn(2+) is bound by residues H8, H10, H16, H41, E74, H102, H132, D192, and H194.

This sequence belongs to the PHP family. Zn(2+) serves as cofactor.

The chain is Probable phosphatase Cthe_0111 from Acetivibrio thermocellus (strain ATCC 27405 / DSM 1237 / JCM 9322 / NBRC 103400 / NCIMB 10682 / NRRL B-4536 / VPI 7372) (Clostridium thermocellum).